The primary structure comprises 267 residues: Large ribosomal subunit protein uL4 (267 aa).

This sequence belongs to the universal ribosomal protein uL4 family. In terms of assembly, part of the 50S ribosomal subunit.

Functionally, one of the primary rRNA binding proteins, this protein initially binds near the 5'-end of the 23S rRNA. It is important during the early stages of 50S assembly. It makes multiple contacts with different domains of the 23S rRNA in the assembled 50S subunit and ribosome. Its function is as follows. Forms part of the polypeptide exit tunnel. The sequence is that of Large ribosomal subunit protein uL4 from Saccharolobus islandicus (strain L.S.2.15 / Lassen #1) (Sulfolobus islandicus).